A 300-amino-acid polypeptide reads, in one-letter code: NAD kinase (300 aa).

D75 functions as the Proton acceptor in the catalytic mechanism. Residues 75–76 (DG), 149–150 (ND), R177, D179, 190–195 (TAYALS), A214, and Q248 contribute to the NAD(+) site.

The protein belongs to the NAD kinase family. Requires a divalent metal cation as cofactor.

Its subcellular location is the cytoplasm. It carries out the reaction NAD(+) + ATP = ADP + NADP(+) + H(+). Involved in the regulation of the intracellular balance of NAD and NADP, and is a key enzyme in the biosynthesis of NADP. Catalyzes specifically the phosphorylation on 2'-hydroxyl of the adenosine moiety of NAD to yield NADP. This Burkholderia lata (strain ATCC 17760 / DSM 23089 / LMG 22485 / NCIMB 9086 / R18194 / 383) protein is NAD kinase.